The chain runs to 334 residues: Galactinol synthase 4 (334 aa).

Lys-104 is a catalytic residue. Asp-120, Asp-122, and His-258 together coordinate Mn(2+).

This sequence belongs to the glycosyltransferase 8 family. Galactosyltransferase subfamily. It depends on a divalent metal cation as a cofactor.

It localises to the cytoplasm. The catalysed reaction is myo-inositol + UDP-alpha-D-galactose = alpha-D-galactosyl-(1-&gt;3)-1D-myo-inositol + UDP + H(+). Its function is as follows. Galactinol synthase involved in the biosynthesis of raffinose family oligosaccharides (RFOs) that function as osmoprotectants. May promote plant stress tolerance. This is Galactinol synthase 4 (GOLS4) from Arabidopsis thaliana (Mouse-ear cress).